The following is a 98-amino-acid chain: NADH-quinone oxidoreductase subunit K (98 aa).

A run of 3 helical transmembrane segments spans residues 1 to 21, 27 to 47, and 59 to 79; these read MGHLLGLGAVLFCISLAGIFL, IVLLMSIELMLLSVNVNFIAF, and FVFFILTVAAAEAAIGLAILV.

It belongs to the complex I subunit 4L family. NDH-1 is composed of 14 different subunits. Subunits NuoA, H, J, K, L, M, N constitute the membrane sector of the complex.

The protein resides in the cell inner membrane. It catalyses the reaction a quinone + NADH + 5 H(+)(in) = a quinol + NAD(+) + 4 H(+)(out). In terms of biological role, NDH-1 shuttles electrons from NADH, via FMN and iron-sulfur (Fe-S) centers, to quinones in the respiratory chain. The immediate electron acceptor for the enzyme in this species is believed to be ubiquinone. Couples the redox reaction to proton translocation (for every two electrons transferred, four hydrogen ions are translocated across the cytoplasmic membrane), and thus conserves the redox energy in a proton gradient. In Xanthomonas oryzae pv. oryzae (strain PXO99A), this protein is NADH-quinone oxidoreductase subunit K.